Reading from the N-terminus, the 340-residue chain is Extracellular matrix protein-binding protein emp (340 aa).

The first 26 residues, 1 to 26 (MKKKLLVLTMSTLFATQIMNSNHAKA), serve as a signal peptide directing secretion.

The protein localises to the cell surface. Adhesin that binds to the host cell extracellular matrix proteins fibronectin, fibrinogen, collagen, and vitronectin. The chain is Extracellular matrix protein-binding protein emp (emp) from Staphylococcus aureus (strain USA300).